The following is a 66-amino-acid chain: MNTKVVLIMLMITSVILVVEAETLFTANCLDRKDCKKHCKSKGCKEMKCEQIIKPTWRCLCIMCSK.

Positions 1–21 (MNTKVVLIMLMITSVILVVEA) are cleaved as a signal peptide. 4 disulfide bridges follow: cysteine 29-cysteine 49, cysteine 35-cysteine 59, cysteine 39-cysteine 61, and cysteine 44-cysteine 64.

This sequence belongs to the short scorpion toxin superfamily. Potassium channel inhibitor family. As to expression, expressed by the venom gland.

Its subcellular location is the secreted. In terms of biological role, blocks voltage-gated potassium channels. In Hoffmannihadrurus gertschi (Scorpion), this protein is Potassium channel toxin alpha-KTx.